Here is a 371-residue protein sequence, read N- to C-terminus: MPHHYILTLFGLLPVATNISTWWNFGSMLLTCLMLQVLTGFFLAVHYTANINLAFSSIIHITRDVPYGWLMQNLHAIGASMFFICIYIHIARGLYYGSHLNKETWMSGITLLITLIATAFFGYVLPGGQMSFRAATGITNLLTAVPYLGATMTTWLWGGFAINDPTLTRFFALHFILPFAIISLSSLHIILLHEEGSSNPLGTNPDIDKIPFHPYHSYKDLLLLTLMLLTLMITVSFFPDIFNDPDNFSKANPLVTPQHIKPEWYFLFAYGILRSIPNKLGGALALVMSIMILLTAPLTHTAHLRPMTFRPLSQLMFWTLISTFITITWAATKPVEPPYIIISQTTATLYFTFFISTPILGWIENKMMNSC.

4 consecutive transmembrane segments (helical) span residues 25–45 (FGSM…FLAV), 69–90 (WLMQ…YIHI), 105–125 (WMSG…GYVL), and 170–190 (FFAL…LHII). H75 and H89 together coordinate heme b. H174 and H188 together coordinate heme b. Residue H193 participates in a ubiquinone binding. 4 consecutive transmembrane segments (helical) span residues 218–238 (YKDL…VSFF), 280–300 (LGGA…PLTH), 312–332 (LSQL…WAAT), and 339–358 (YIII…ISTP).

The protein belongs to the cytochrome b family. The cytochrome bc1 complex contains 3 respiratory subunits (MT-CYB, CYC1 and UQCRFS1), 2 core proteins (UQCRC1 and UQCRC2) and probably 6 low-molecular weight proteins. The cofactor is heme b.

It localises to the mitochondrion inner membrane. Component of the ubiquinol-cytochrome c reductase complex (complex III or cytochrome b-c1 complex) that is part of the mitochondrial respiratory chain. The b-c1 complex mediates electron transfer from ubiquinol to cytochrome c. Contributes to the generation of a proton gradient across the mitochondrial membrane that is then used for ATP synthesis. This Python regius (Ball python) protein is Cytochrome b (MT-CYB).